Here is a 468-residue protein sequence, read N- to C-terminus: Glutamate--tRNA ligase (468 aa).

A 'HIGH' region motif is present at residues 8 to 18 (PSPTGFLHVGG). Positions 97, 99, 124, and 126 each coordinate Zn(2+). Positions 236-240 (KLSKR) match the 'KMSKS' region motif. An ATP-binding site is contributed by K239.

It belongs to the class-I aminoacyl-tRNA synthetase family. Glutamate--tRNA ligase type 1 subfamily. In terms of assembly, monomer. The cofactor is Zn(2+).

The protein localises to the cytoplasm. It carries out the reaction tRNA(Glu) + L-glutamate + ATP = L-glutamyl-tRNA(Glu) + AMP + diphosphate. Catalyzes the attachment of glutamate to tRNA(Glu) in a two-step reaction: glutamate is first activated by ATP to form Glu-AMP and then transferred to the acceptor end of tRNA(Glu). In Francisella tularensis subsp. novicida (strain U112), this protein is Glutamate--tRNA ligase.